Consider the following 103-residue polypeptide: Large ribosomal subunit protein uL24 (103 aa).

This sequence belongs to the universal ribosomal protein uL24 family. Part of the 50S ribosomal subunit.

One of two assembly initiator proteins, it binds directly to the 5'-end of the 23S rRNA, where it nucleates assembly of the 50S subunit. Functionally, one of the proteins that surrounds the polypeptide exit tunnel on the outside of the subunit. The protein is Large ribosomal subunit protein uL24 of Halalkalibacterium halodurans (strain ATCC BAA-125 / DSM 18197 / FERM 7344 / JCM 9153 / C-125) (Bacillus halodurans).